Consider the following 242-residue polypeptide: NLP effector protein 8 (242 aa).

The signal sequence occupies residues 1–17 (MHLTVFYLVALCTFASA). The Conserved undecapeptide motif signature appears at 108 to 118 (AIMYAWYFPRD). A Conserved heptapeptide motif motif is present at residues 127-133 (GHRNAWE). N-linked (GlcNAc...) asparagine glycosylation is present at N206.

Belongs to the Necrosis inducing protein (NPP1) family.

It is found in the secreted. Functionally, probable secreted effector that may act as a pathogen-associated molecular pattern (PAMP) recognized by the plant immune system. The polypeptide is NLP effector protein 8 (Plasmopara viticola (Downy mildew of grapevine)).